Here is a 517-residue protein sequence, read N- to C-terminus: MSPLNGVARSLPRPFQAVARRPFRVAQPAVACPSNRRSFNHSRSLRSTGSQSPAPSPRDSSNPALSFPCLDAQEAKSALLSARSLGSGPEPSYTAGHHERFHSDEPLLLDWGGLLPEFDIAYETWGQLNEKKDNVILLHTGLSASSHAHSTEANPKPGWWEKFIGPGKTLDTDKYFVICTNVLGGCYGSTGPSTVDPSDGKKYATRFPILTIEDMVRAQFRLLDHLGVRKLYASVGSSMGGMQSLAAGVLFPERVGKIVSISGCARSHPYSIAMRHTQRQVLMMDPNWARGFYYDSIPPHSGMKLAREIATVTYRSGPEWEKRFGRKRADPSKQPALCPDFLIETYLDHAGEKFCLEYDANSLLYISKAMDLFDLGLTQQLATKKQRAEAQAKISSGTNTVNDASCSLTLPEQPYQEQPSASTSAEQSASASETGSAPNDLVAGLAPLKDHQVLVIGVASDILFPAWQQREIAETLIQAGNKTVEHIELGNDVSLFGHDTFLLDVKNVGGAVRKFLD.

A mitochondrion-targeting transit peptide spans 1–46 (MSPLNGVARSLPRPFQAVARRPFRVAQPAVACPSNRRSFNHSRSLR). A disordered region spans residues 34–66 (SNRRSFNHSRSLRSTGSQSPAPSPRDSSNPALS). Over residues 45–64 (LRSTGSQSPAPSPRDSSNPA) the composition is skewed to polar residues. An AB hydrolase-1 domain is found at 134–386 (NVILLHTGLS…LTQQLATKKQ (253 aa)). An important for substrate specificity region spans residues 141–144 (GLSA). S238 functions as the Nucleophile in the catalytic mechanism. Position 307 (R307) interacts with substrate. Residues 413-436 (QPYQEQPSASTSAEQSASASETGS) form a disordered region. Over residues 416-436 (QEQPSASTSAEQSASASETGS) the composition is skewed to low complexity. Catalysis depends on residues D461 and H498. Residue D499 coordinates substrate.

Belongs to the AB hydrolase superfamily. MetX family.

The protein resides in the mitochondrion. The catalysed reaction is succinyl-CoA + L-serine = O-succinyl-L-serine + CoA. Its pathway is amino-acid biosynthesis; L-cysteine biosynthesis; L-cysteine from L-serine: step 1/2. In terms of biological role, transfers a succinyl group from succinyl-CoA to L-serine, forming succinyl-L-serine. Also has weak serine acetyl transferase activity and homoserine succinyl transferase activity. The sequence is that of Serine O-succinyltransferase from Emericella nidulans (Aspergillus nidulans).